We begin with the raw amino-acid sequence, 188 residues long: ATP synthase subunit delta (188 aa).

This sequence belongs to the ATPase delta chain family. In terms of assembly, F-type ATPases have 2 components, F(1) - the catalytic core - and F(0) - the membrane proton channel. F(1) has five subunits: alpha(3), beta(3), gamma(1), delta(1), epsilon(1). F(0) has three main subunits: a(1), b(2) and c(10-14). The alpha and beta chains form an alternating ring which encloses part of the gamma chain. F(1) is attached to F(0) by a central stalk formed by the gamma and epsilon chains, while a peripheral stalk is formed by the delta and b chains.

It localises to the cell inner membrane. F(1)F(0) ATP synthase produces ATP from ADP in the presence of a proton or sodium gradient. F-type ATPases consist of two structural domains, F(1) containing the extramembraneous catalytic core and F(0) containing the membrane proton channel, linked together by a central stalk and a peripheral stalk. During catalysis, ATP synthesis in the catalytic domain of F(1) is coupled via a rotary mechanism of the central stalk subunits to proton translocation. Its function is as follows. This protein is part of the stalk that links CF(0) to CF(1). It either transmits conformational changes from CF(0) to CF(1) or is implicated in proton conduction. The sequence is that of ATP synthase subunit delta from Rhizobium etli (strain ATCC 51251 / DSM 11541 / JCM 21823 / NBRC 15573 / CFN 42).